The sequence spans 235 residues: MTQPASSRVVFDPSNPTTFSVEAIAAYTPVALIRLLNASGPLQPGHRVDIADARSIYTVGAAASAARARANHNANTIRRTAMFAETDPMTWLRPTVGLKRTFNPRIIRPQPPNPSMSLGISGPTILPQKTQSADQSALQQPAALAFSGSSPQHPPPQTTSASVGQQQHVVSGSSGQQPQQGAQSSTVQPTTGSPPAAQGVPQSTPPPTQNTPQGGKGQTLSHTGQSGNASRSRRV.

Residues 104–235 form a disordered region; it reads PRIIRPQPPN…SGNASRSRRV (132 aa). Residues 127 to 139 show a composition bias toward polar residues; that stretch reads PQKTQSADQSALQ. A compositionally biased stretch (low complexity) spans 158–188; it reads TTSASVGQQQHVVSGSSGQQPQQGAQSSTVQ. A compositionally biased stretch (polar residues) spans 220–235; the sequence is LSHTGQSGNASRSRRV.

It belongs to the herpesviridae small capsomere-interacting protein family. Interacts with the major capsid protein/MCP.

The protein localises to the virion. It localises to the host nucleus. Functionally, participates in the assembly of the infectious particles by decorating the outer surface of the capsid shell and thus forming a layer between the capsid and the tegument. Complexes composed of the capsid protein VP5 and VP26 assemble together in the host cytoplasm and are translocated to the nucleus, where they accumulate and participate in capsid assembly. Participates in the assembly of the infectious particles by decorating the outer surface of the capsid shell and thus forming a layer between the capsid and the tegument. Complexes composed of the major capsid protein and small capsomere-interacting protein/SCP assemble together in the host cytoplasm and are translocated to the nucleus, where they accumulate and participate in capsid assembly. The chain is Small capsomere-interacting protein from Homo sapiens (Human).